The chain runs to 382 residues: 8-amino-7-oxononanoate synthase (382 aa).

The substrate site is built by arginine 22 and arginine 29. Glycine 109–phenylalanine 110 serves as a coordination point for pyridoxal 5'-phosphate. Residue histidine 134 coordinates substrate. Pyridoxal 5'-phosphate contacts are provided by residues serine 182, aspartate 207–histidine 210, and threonine 233–lysine 236. An N6-(pyridoxal phosphate)lysine modification is found at lysine 236. Threonine 345 is a binding site for substrate.

It belongs to the class-II pyridoxal-phosphate-dependent aminotransferase family. BioF subfamily. In terms of assembly, homodimer. Pyridoxal 5'-phosphate is required as a cofactor.

It catalyses the reaction 6-carboxyhexanoyl-[ACP] + L-alanine + H(+) = (8S)-8-amino-7-oxononanoate + holo-[ACP] + CO2. It participates in cofactor biosynthesis; biotin biosynthesis. Catalyzes the decarboxylative condensation of pimeloyl-[acyl-carrier protein] and L-alanine to produce 8-amino-7-oxononanoate (AON), [acyl-carrier protein], and carbon dioxide. This is 8-amino-7-oxononanoate synthase from Granulibacter bethesdensis (strain ATCC BAA-1260 / CGDNIH1).